The following is a 513-amino-acid chain: MQLNSTEISELIKQRIAQFNVVSEAHNEGTIVSVSDGIIRVHGLADVMQGEMIALPGNRYAIALNLERDSVGAVVMGPYADLAEGMKVKCTGRILEVPVGRGLLGRVVNTLGEPIDGKGSIENDGFSAVEAIAPGVIERQSVDEPVQTGYKSVDAMIPIGRGQRELIIGDRQTGKTALAIDAIINQRDSGIKCVYVAIGQKASTVANVVRKLEEHDALANTIVVVATASESAALQYLAPYSGCAMGEYFRDRGEDALIIYDDLSKQAVAYRQISLLLRRPPGREAYPGDVFYLHSRLLERAARVNAEYVEAFTKGEVKGKTGSLTALPIIETQAGDVSAFVPTNVISITDGQIFLESSLFNAGIRPAVNPGISVSRVGGAAQTKIMKKLSGGIRTALAQYRELAAFSQFASDLDDATRKQLSHGQKVTELLKQKQYAPMSVAQQSLVLFAAERGYLGDVELAKVGSFEAALLAFADREHAELLQQINQTGAYNDEIEAKLKGILDTFKATQSW.

169-176 is an ATP binding site; it reads GDRQTGKT.

It belongs to the ATPase alpha/beta chains family. As to quaternary structure, F-type ATPases have 2 components, CF(1) - the catalytic core - and CF(0) - the membrane proton channel. CF(1) has five subunits: alpha(3), beta(3), gamma(1), delta(1), epsilon(1). CF(0) has three main subunits: a(1), b(2) and c(9-12). The alpha and beta chains form an alternating ring which encloses part of the gamma chain. CF(1) is attached to CF(0) by a central stalk formed by the gamma and epsilon chains, while a peripheral stalk is formed by the delta and b chains.

It is found in the cell inner membrane. The enzyme catalyses ATP + H2O + 4 H(+)(in) = ADP + phosphate + 5 H(+)(out). In terms of biological role, produces ATP from ADP in the presence of a proton gradient across the membrane. The alpha chain is a regulatory subunit. The chain is ATP synthase subunit alpha from Yersinia pseudotuberculosis serotype O:1b (strain IP 31758).